Reading from the N-terminus, the 62-residue chain is UPF0434 protein azo1471 (62 aa).

The protein belongs to the UPF0434 family.

In Azoarcus sp. (strain BH72), this protein is UPF0434 protein azo1471.